A 1846-amino-acid chain; its full sequence is Brefeldin A-inhibited guanine nucleotide-exchange protein 1 (1846 aa).

A DCB; DCB:DCB domain and DCB:HUS domain interaction region spans residues 2-224; sequence YEGKKTKNMF…QEAKQMERER (223 aa). Serine 52 is modified (phosphoserine). Disordered regions lie at residues 216–249, 264–304, and 347–410; these read EAKQ…LRYL, DLEP…ATAA, and ISAS…SPGA. Over residues 264 to 277 the composition is skewed to basic and acidic residues; it reads DLEPQTHDVDKSLQ. Serine 286, serine 289, and serine 290 each carry phosphoserine. 2 stretches are compositionally biased toward polar residues: residues 348 to 357 and 391 to 406; these read SASTEGNTGT and SVSS…SSGP. Phosphoserine occurs at positions 394 and 407. An HUS; DCB:HUS domain interaction region spans residues 554 to 574; the sequence is ADAQSVVDIYVNYDCDLNAAN. The disordered stretch occupies residues 631 to 684; that stretch reads PNSQTTLGQEKPSEQEISEVKHPETINRYGSLNSLESTSSSGIGSYSTQMSGTD. Over residues 641–655 the composition is skewed to basic and acidic residues; sequence KPSEQEISEVKHPET. Positions 661–681 are enriched in low complexity; sequence SLNSLESTSSSGIGSYSTQMS. An SEC7 domain is found at 688–877; sequence QFEVLKQQKE…SAIYNEIAGK (190 aa). A Nuclear localization signal (NLS) motif is present at residues 708–712; the sequence is KKPKR. Residues serine 1076, serine 1563, and serine 1566 each carry the phosphoserine modification.

In terms of assembly, homodimer. Interacts with ARFGEF2/BIG2; both proteins are probably part of the same or very similar macromolecular complexes. Interacts with FKBP2. Interacts with MYO9B. Interacts with PRKAR1A and PRKAR2A. Interacts with PPP1CC. Interacts with NCL, FBL, NUP62 and U3 small nucleolar RNA. Interacts with DPY30. Interacts with PDE3A. Interacts with KANK1. Interacts with TBC1D22A and TBC1D22B. In terms of processing, phosphorylated. In vitro phosphorylated by PKA reducing its GEF activity and dephosphorylated by phosphatase PP1.

The protein localises to the cytoplasm. It is found in the perinuclear region. It localises to the golgi apparatus. Its subcellular location is the trans-Golgi network. The protein resides in the nucleus. The protein localises to the nucleolus. It is found in the nucleus matrix. It localises to the membrane. Inhibited by brefeldin A. Its function is as follows. Promotes guanine-nucleotide exchange on ARF1 and ARF3. Promotes the activation of ARF1/ARF3 through replacement of GDP with GTP. Involved in vesicular trafficking. Required for the maintenance of Golgi structure; the function may be independent of its GEF activity. Required for the maturation of integrin beta-1 in the Golgi. Involved in the establishment and persistence of cell polarity during directed cell movement in wound healing. Proposed to act as A kinase-anchoring protein (AKAP) and may mediate crosstalk between Arf and PKA pathways. Inhibits GAP activity of MYO9B probably through competitive RhoA binding. The function in the nucleus remains to be determined. This is Brefeldin A-inhibited guanine nucleotide-exchange protein 1 (Arfgef1) from Mus musculus (Mouse).